Here is a 1318-residue protein sequence, read N- to C-terminus: MSQKTNENVERYTQFLQKPQKPIQPYICSTLNDFQEERDFLANNIFPQLNELCNSWGTYFKAVDLSWSALKAPKSLPTHLFRQYSCLRSQRLKLCLDYVNSCFPFFICMLGQTYGDFLPDYSHFMTSKVTRLSSLSKVENLYVAAKNGYPWVLENPSCSLTEFEIIQAAFLNESQFQYFYFRTGTTLLKALDDEKKGERLPSSSSTNEEETLRIGKLKAKIISKGLPVRFYSDLHELGELVFKDWSVVIEKLHPATLMIENIDYKHSFERFYHEEFTEKCKQMCVISKESDRTFEILEKFALKDVELDFNNVAADSSLDSVPRFFRINPTPTYKSILLLSREHGCGKSTLIANWVNYFKKKHPSMLLIPHFVGSTCESSYIMSVIHYFITELQYRNYGTQLETDILNEDSDGLVFSFLVEVFIASISLKPCILVLDGIEELIGIYGISGQKVKDFSWLPHSLSPHCKFIMSTVSSSLSYKSLCARPDVRTVELISTGDEETKLNIFRKHLSIPMMDPFEQSTQALRKKPDLSPLKLTILANELKEYRINHNEFQCMKEYLEAVSVQELWELVLKRWIEDYSWTFQPKRANSDTVASGEGLDSWVADALCLLCLSHGGLAEDELLQLLDMLGYRNHYKVTALHWAAFRNATKQWVQEKPNGLLYFWHQSLSAVEHKLLGVITPVESSPCSFQTPMNHKKTHFHQVLIRYFQRQTSFWRVYQELPWHMKMSGCLRGLCGFLSSPTITDFISKIQSLGFWTRLHLIHFWNVLLEAGYDVSEAYLLSVAKIKADQCHTMRKSGTLSVLQCRLIELTVLDKCRLMFFIGSFLKFMGKTNEAEELFLSVEDMLVQSQSMTDMLLKVQNAIGELYLETGMTQEGFQYFQKAWSSMLRLSLSDLEDSRDLVKQKVRVLDNLAKSASEEYLKENHILEYATEISNLLDNNPRDQATMKYIEGVLMFVAGNTSLAKMKLRECLNIRKSLFGKKNMLVGEVMEFLADLLFFPQRDSKKSQRKQVLKYYKQVIKIKENAETLAKSSLLRKQLSISLSDTLCKLAGHLLASDSCHHVMIEAVGYLYRSVDLRVIHLGSSHSSIHGIHGILHLLREIEWIRSRRYWPQGMSQQHSEGSRNGFSLWEHLVKLNYHSAQSSNTVSSAMCMNADKLHRARRMDLAPQTISDKSKCAPGKGKKKPIICISAEEKIQRKTQNNAEIWNGSGKEASKKKTDYSSNILSLGKMNGLIKLSRQRILLAKSESGEGEITTIYHHPLPWPVSTKNPGESEFISEKWLFHSPDYISISQKSFLQRRLHIETKLLKTSNDINKE.

TPR repeat units lie at residues 399–432 (TQLETDILNEDSDGLVFSFLVEVFIASISLKPCI), 653–684 (WVQEKPNGLLYFWHQSLSAVEHKLLGVITPVE), 817–850 (CRLMFFIGSFLKFMGKTNEAEELFLSVEDMLVQS), 858–891 (LKVQNAIGELYLETGMTQEGFQYFQKAWSSMLRL), 991–1027 (MEFLADLLFFPQRDSKKSQRKQVLKYYKQVIKIKENA), and 1045–1082 (SDTLCKLAGHLLASDSCHHVMIEAVGYLYRSVDLRVIH).

The protein localises to the cytoplasm. The protein is Putative tetratricopeptide repeat protein 41 of Homo sapiens (Human).